We begin with the raw amino-acid sequence, 207 residues long: Large ribosomal subunit protein uL4 (207 aa).

The protein belongs to the universal ribosomal protein uL4 family. Part of the 50S ribosomal subunit.

Functionally, one of the primary rRNA binding proteins, this protein initially binds near the 5'-end of the 23S rRNA. It is important during the early stages of 50S assembly. It makes multiple contacts with different domains of the 23S rRNA in the assembled 50S subunit and ribosome. In terms of biological role, forms part of the polypeptide exit tunnel. The sequence is that of Large ribosomal subunit protein uL4 from Rickettsia rickettsii (strain Iowa).